A 1412-amino-acid polypeptide reads, in one-letter code: MELEEVGVEANQPNNDQGSKKQNKNKDKKVKKEKKIGYGGKKSAEENSNFISWLTFSWADRFVVHCFRHVLQLSHIWDLASYDKSAYLAEKIAISWDVEIKKPKPSYIRAAFRAFGLYFVLSWFFYAIYAASQFVGPEILKRMVTFVLKSRSGISTEDPNMGYYYALIMFGSAMIGSVCLYQSNMISARTGDRLRSVIVLDVYRKAIKLSNSARANTSPGEIVNLMSNDAQRMVEVFQLVNNGVFALPQIIVCLALLYRAIGWPTFVGLGLMLAAVPFNGIAAKKLTEIRRHLVGFTDKRVKTTNEILQAIKIIKLYAWEDSFAKKVIERREAEIKLLFSFSRYRAMLIVIVAALPTAVSVLVFSSYYGYYKKLDAGEIFAALSYLNILRLPLGFLPIIVALGIQMKIAAQRVTDFLLLPEMKEISKIEDPSIENGIYIRDATLTWNQEKKEESFTLKNINFEAKGKTLTMIVGSVGSGKSSLIQAMLGEMDVLDGSVAMKGNVAYVPQQAWIINATLKDNILFGSPYDEAKYRKVLEVCALERDIELFPQGDLVEIGERGVNLSGGQKQRVSIARAVYSDSDVYILDDPLSAVDAHVGKHLFHRCFKGILKSKTVILAANQLNYLPFAHNTVVLKAGEISERGSYQQLINAQKEFSGLLQAYGVDESAVNEDVEDDKEIEESDNIVVEEKTKPTEKPKLQNKDGVLTSQEEREEGAVAMWVYWKYITVGGGFLFLMAFIFFLMDTGTRTFVDWWLSHWQNESTKNALAVAQGLEPSGLTDTQYLGIYIGVGMTSILISAGRNFLFFEYTVRASRALHHQLFNALLRAPMSFFDTTPLGRIINRFTRDLDGVDNLMATSISQFLVFFTTVVATLIIISIITPFLLVPLAPICIIFYFLQFFYRYTSRELQRLEAISRSPIFSHFSETLGGVVSIRAYRKKEENILTNQFRLDNNNKCYLTLQAMNQWLGLRLDLLANLVTFFACLFITIDRDTISAANVGLSLSYALSLTGNLNRATLQAADTETKMNSVERITHYIKGPVEALQIVEDHRPAPDWPPHGAITFDNLVMRYREGLDPVLKGISCEIKAKEKIGIVGRTGAGKSSIVLALFRLIEASEGAILIDGENIAKFGLKDLRRNLAIIPQDPVLFSGTLRENIDPFNEKTDDQLWSVLKDIQLHDVAKSLEGGLDSKVTENGDNWSVGQRQLLCLARALLRDPKILVLDEATASVDGHSDSLIQATIREKFSNCTILTIAHRLNTIMDSDRIIVLDAGKISEFDEPWTLLQNPAGLLNWLVEETGPQNAAYLRRLAQAKKDGVNIDQITPPISPTPEQKPFKNADIDNINSPPQQSLKAEDNPNPKALDNSGDNNNNNNNNNNNNNNNNNNNNNNNNNNNNNDNDNDNDNDNSEAGDN.

The tract at residues 1–34 (MELEEVGVEANQPNNDQGSKKQNKNKDKKVKKEK) is disordered. Over residues 21 to 34 (KQNKNKDKKVKKEK) the composition is skewed to basic residues. 6 helical membrane passes run 115–135 (FGLYFVLSWFFYAIYAASQFV), 161–181 (MGYYYALIMFGSAMIGSVCLY), 236–256 (VFQLVNNGVFALPQIIVCLAL), 261–281 (IGWPTFVGLGLMLAAVPFNGI), 346–366 (AMLIVIVAALPTAVSVLVFSS), and 379–399 (IFAALSYLNILRLPLGFLPII). The ABC transmembrane type-1 1 domain maps to 119–405 (FVLSWFFYAI…LPIIVALGIQ (287 aa)). Residues 439 to 662 (IRDATLTWNQ…QKEFSGLLQA (224 aa)) enclose the ABC transporter 1 domain. 474–481 (GSVGSGKS) contacts ATP. Transmembrane regions (helical) follow at residues 724-744 (WKYITVGGGFLFLMAFIFFLM), 787-807 (IYIGVGMTSILISAGRNFLFF), 854-874 (NLMATSISQFLVFFTTVVATL), 875-895 (IIISIITPFLLVPLAPICIIF), and 967-987 (WLGLRLDLLANLVTFFACLFI). Positions 735-1025 (FLMAFIFFLM…ATLQAADTET (291 aa)) constitute an ABC transmembrane type-1 2 domain. An ABC transporter 2 domain is found at 1062 to 1296 (ITFDNLVMRY…PAGLLNWLVE (235 aa)). 1096–1103 (GRTGAGKS) is a binding site for ATP. The tract at residues 1316 to 1412 (GVNIDQITPP…DNDNSEAGDN (97 aa)) is disordered. Polar residues predominate over residues 1342–1351 (NINSPPQQSL). Low complexity predominate over residues 1367-1397 (DNNNNNNNNNNNNNNNNNNNNNNNNNNNNND). Positions 1398–1412 (NDNDNDNDNSEAGDN) are enriched in acidic residues.

It belongs to the ABC transporter superfamily. ABCC family. Conjugate transporter (TC 3.A.1.208) subfamily.

The protein localises to the membrane. The sequence is that of ABC transporter C family member 3 (abcC3) from Dictyostelium discoideum (Social amoeba).